The following is a 588-amino-acid chain: Aspartate--tRNA ligase (588 aa).

Glu172 lines the L-aspartate pocket. The tract at residues 196-199 (QLFK) is aspartate. L-aspartate is bound at residue Arg218. ATP contacts are provided by residues 218-220 (RDE) and Gln227. His449 provides a ligand contact to L-aspartate. Glu483 serves as a coordination point for ATP. L-aspartate is bound at residue Arg490. 535–538 (GLDR) contacts ATP.

Belongs to the class-II aminoacyl-tRNA synthetase family. Type 1 subfamily. Homodimer.

It localises to the cytoplasm. It carries out the reaction tRNA(Asp) + L-aspartate + ATP = L-aspartyl-tRNA(Asp) + AMP + diphosphate. In terms of biological role, catalyzes the attachment of L-aspartate to tRNA(Asp) in a two-step reaction: L-aspartate is first activated by ATP to form Asp-AMP and then transferred to the acceptor end of tRNA(Asp). This chain is Aspartate--tRNA ligase, found in Haemophilus influenzae (strain 86-028NP).